The primary structure comprises 267 residues: Endonuclease NucS (267 aa).

It belongs to the NucS endonuclease family.

The protein resides in the cytoplasm. Functionally, cleaves both 3' and 5' ssDNA extremities of branched DNA structures. This chain is Endonuclease NucS, found in Pyrococcus furiosus (strain ATCC 43587 / DSM 3638 / JCM 8422 / Vc1).